Here is a 411-residue protein sequence, read N- to C-terminus: NAD-dependent dihydropyrimidine dehydrogenase subunit PreA (411 aa).

Substrate contacts are provided by residues Asn-76 and 134–136; that span reads NFS. The active-site Nucleophile is the Cys-137. Position 201–202 (201–202) interacts with substrate; the sequence is NT. 4Fe-4S ferredoxin-type domains are found at residues 335 to 367 and 369 to 398; these read VYPR…WSEK and RTPH…LGEV. The [4Fe-4S] cluster site is built by Cys-344, Cys-347, Cys-350, Cys-354, Cys-378, Cys-381, Cys-384, and Cys-388.

The protein belongs to the dihydropyrimidine dehydrogenase family. Heterotetramer of 2 PreA and 2 PreT subunits. The cofactor is [4Fe-4S] cluster.

The enzyme catalyses 5,6-dihydrouracil + NAD(+) = uracil + NADH + H(+). It carries out the reaction 5,6-dihydrothymine + NAD(+) = thymine + NADH + H(+). Its function is as follows. Involved in pyrimidine base degradation. Catalyzes physiologically the reduction of uracil to 5,6-dihydrouracil (DHU) by using NADH as a specific cosubstrate. It also catalyzes the reverse reaction and the reduction of thymine to 5,6-dihydrothymine (DHT). This is NAD-dependent dihydropyrimidine dehydrogenase subunit PreA (preA) from Escherichia coli O157:H7.